Reading from the N-terminus, the 351-residue chain is Photosystem II D2 protein (351 aa).

The helical transmembrane segment at 39 to 59 threads the bilayer; sequence TAYLSIGGWLTGTTFVTSWYT. His-116 contributes to the chlorophyll a binding site. The helical transmembrane segment at 123-139 threads the bilayer; the sequence is GFMLRQFEIARLVGIRP. Pheophytin a-binding residues include Gln-128 and Asn-141. The chain crosses the membrane as a helical span at residues 151 to 164; it reads VFVSVFLMYPLGQS. His-196 contributes to the chlorophyll a binding site. Residues 206-226 form a helical membrane-spanning segment; sequence GALLCAIHGATVENTLFEDGE. 2 residues coordinate a plastoquinone: His-213 and Phe-260. Fe cation is bound at residue His-213. His-267 contacts Fe cation. A helical transmembrane segment spans residues 277–293; the sequence is GLWTSAIGIIGLALNLR.

Belongs to the reaction center PufL/M/PsbA/D family. In terms of assembly, PSII is composed of 1 copy each of membrane proteins PsbA, PsbB, PsbC, PsbD, PsbE, PsbF, PsbH, PsbI, PsbJ, PsbK, PsbL, PsbM, PsbT, PsbX, PsbY, PsbZ, Psb30/Ycf12, peripheral proteins PsbO, CyanoQ (PsbQ), PsbU, PsbV and a large number of cofactors. It forms dimeric complexes. The D1/D2 heterodimer binds P680, chlorophylls that are the primary electron donor of PSII, and subsequent electron acceptors. It shares a non-heme iron and each subunit binds pheophytin, quinone, additional chlorophylls, carotenoids and lipids. There is also a Cl(-1) ion associated with D1 and D2, which is required for oxygen evolution. The PSII complex binds additional chlorophylls, carotenoids and specific lipids. serves as cofactor.

It is found in the cellular thylakoid membrane. It carries out the reaction 2 a plastoquinone + 4 hnu + 2 H2O = 2 a plastoquinol + O2. Photosystem II (PSII) is a light-driven water:plastoquinone oxidoreductase that uses light energy to abstract electrons from H(2)O, generating O(2) and a proton gradient subsequently used for ATP formation. It consists of a core antenna complex that captures photons, and an electron transfer chain that converts photonic excitation into a charge separation. The D1/D2 (PsbA/PsbD) reaction center heterodimer binds P680, the primary electron donor of PSII as well as several subsequent electron acceptors. D2 is needed for assembly of a stable PSII complex. The polypeptide is Photosystem II D2 protein (Synechococcus sp. (strain CC9311)).